A 162-amino-acid chain; its full sequence is Probable metalloprotease y4jG (162 aa).

One can recognise an MPN domain in the interval 9–147; it reads TVALPRDCVS…YRLDAKANWN (139 aa). Residues His94, His96, and Asp107 each coordinate Zn(2+).

The protein belongs to the peptidase M67B family.

This Sinorhizobium fredii (strain NBRC 101917 / NGR234) protein is Probable metalloprotease y4jG.